The primary structure comprises 628 residues: 1-deoxy-D-xylulose-5-phosphate synthase (628 aa).

Thiamine diphosphate is bound by residues His72 and 113–115 (GHS). Asp144 provides a ligand contact to Mg(2+). Thiamine diphosphate-binding positions include 145 to 146 (GA), Asn173, Tyr284, and Glu363. Asn173 serves as a coordination point for Mg(2+).

Belongs to the transketolase family. DXPS subfamily. In terms of assembly, homodimer. Mg(2+) is required as a cofactor. Requires thiamine diphosphate as cofactor.

The catalysed reaction is D-glyceraldehyde 3-phosphate + pyruvate + H(+) = 1-deoxy-D-xylulose 5-phosphate + CO2. Its pathway is metabolic intermediate biosynthesis; 1-deoxy-D-xylulose 5-phosphate biosynthesis; 1-deoxy-D-xylulose 5-phosphate from D-glyceraldehyde 3-phosphate and pyruvate: step 1/1. Functionally, catalyzes the acyloin condensation reaction between C atoms 2 and 3 of pyruvate and glyceraldehyde 3-phosphate to yield 1-deoxy-D-xylulose-5-phosphate (DXP). This Brevibacillus brevis (strain 47 / JCM 6285 / NBRC 100599) protein is 1-deoxy-D-xylulose-5-phosphate synthase.